The following is a 518-amino-acid chain: Cytochrome P450 monooxygenase ARMGADRAFT_1018417 (518 aa).

The chain crosses the membrane as a helical span at residues 3-23; it reads LFSAYALAFSLLMIPLILYIL. Cys433 serves as a coordination point for heme. Asn455 carries an N-linked (GlcNAc...) asparagine glycan.

Belongs to the cytochrome P450 family. Heme serves as cofactor.

Its subcellular location is the membrane. Its pathway is secondary metabolite biosynthesis. Functionally, cytochrome P450 monooxygenase, part of the gene cluster that mediates the biosynthesis of melleolides, a range of antifungal and phytotoxic polyketide derivatives composed of an orsellinic acid (OA) moiety esterified to various sesquiterpene alcohols. The first step in melleolides biosynthesis is performed by the delta(6)-protoilludene synthase PRO1 which catalyzes the cyclization of farnesyl diphosphate to protoilludene. The orsellinic acid synthase armB produces OA by condensing acetyl-CoA with 3 malonyl-CoA units in a three-round chain elongation reaction folowed by a C2-C7 ring closure. ArmB further catalyzes the trans-esterification of OA to the various sesquiterpene alcohols resulting from the hydroxylation of protoilludene. The melleolides cluster also includes 5 cytochrome P450 monooxygenases, 4 NAD(+)-dependent oxidoreductases, one flavin-dependent oxidoreductase, and one O-methyltransferase. The cytochrome P450 monooxygenases may be involved in protoilludene hydroxylation to elaborate melleolides with multiple alcohol groups, such as melleolide D, which carries alcohol functionalities at C-4, C-5, C-10, and C-13. The role of the NAD(+)-dependent enzymes remains unknown. Numerous melleolides, including arnamial, show 5'-O-methylation of the aromatic moiety which may be catalyzed by the methyltransferase encoded in the cluster. The flavin-dependent oxidoreductase might represent the dehydrogenase yielding the aldehyde in position 1 of arnamial and other melleolides. Finally, several halogenase localized outside of the cluster, are able to catalyze the transfer of a single chlorine atom to the melleolide backbone, resulting in a 6'-chloromelleolide product. This chain is Cytochrome P450 monooxygenase ARMGADRAFT_1018417, found in Armillaria gallica (Bulbous honey fungus).